The chain runs to 122 residues: Large ribosomal subunit protein uL14 (122 aa).

The protein belongs to the universal ribosomal protein uL14 family. In terms of assembly, part of the 50S ribosomal subunit. Forms a cluster with proteins L3 and L19. In the 70S ribosome, L14 and L19 interact and together make contacts with the 16S rRNA in bridges B5 and B8.

Binds to 23S rRNA. Forms part of two intersubunit bridges in the 70S ribosome. This is Large ribosomal subunit protein uL14 from Geobacillus thermodenitrificans (strain NG80-2).